Consider the following 88-residue polypeptide: Small ribosomal subunit protein bS16c (88 aa).

Component of the chloroplast small ribosomal subunit (SSU). Mature 70S chloroplast ribosomes of higher plants consist of a small (30S) and a large (50S) subunit. The 30S small subunit contains 1 molecule of ribosomal RNA (16S rRNA) and 24 different proteins. The 50S large subunit contains 3 rRNA molecules (23S, 5S and 4.5S rRNA) and 33 different proteins.

Its subcellular location is the plastid. The protein resides in the chloroplast. In terms of biological role, component of the chloroplast ribosome (chloro-ribosome), a dedicated translation machinery responsible for the synthesis of chloroplast genome-encoded proteins, including proteins of the transcription and translation machinery and components of the photosynthetic apparatus. In Spinacia oleracea (Spinach), this protein is Small ribosomal subunit protein bS16c.